The primary structure comprises 375 residues: Xylose transport system permease protein XylH (375 aa).

The next 10 helical transmembrane spans lie at 9-29 (LQVY…SVAT), 52-72 (LAIG…VGSL), 85-105 (VWWG…GLIF), 118-138 (VPSF…LIGL), 159-179 (LSDI…VLWG), 199-219 (DFTK…LLND), 220-240 (YRGI…GLFL), 271-291 (KLII…ILSA), 319-339 (LAGG…IASL), and 348-368 (VPTF…VWID).

The protein belongs to the binding-protein-dependent transport system permease family. AraH/RbsC subfamily.

The protein resides in the cell inner membrane. Functionally, part of the binding-protein-dependent transport system for D-xylose. Probably responsible for the translocation of the substrate across the membrane. This chain is Xylose transport system permease protein XylH (xylH), found in Haemophilus influenzae (strain ATCC 51907 / DSM 11121 / KW20 / Rd).